The chain runs to 328 residues: Lactamase-like protein nscB (328 aa).

Residues histidine 97, histidine 99, aspartate 101, and histidine 102 each coordinate Zn(2+). Aspartate 101 (proton donor/acceptor) is an active-site residue.

The protein belongs to the metallo-beta-lactamase superfamily. Zn(2+) serves as cofactor.

Its pathway is secondary metabolite biosynthesis. Its function is as follows. Lactamase-like protein; part of the gene cluster that mediates the biosynthesis of neosartoricin, a prenylated anthracenone that exhibits T-cell antiproliferative activity, suggestive of a physiological role as an immunosuppressive agent. The non-reducing polyketide synthase nscA probably synthesizes and cyclizes the decaketide backbone. The hydrolase nscB then mediates the product release through hydrolysis followed by spontaneous decarboxylation. The prenyltransferase nscD catalyzes the addition of the dimethylallyl group to the aromatic C5. The FAD-dependent monooxygenase nscC is then responsible for the stereospecific hydroxylation at C2. There is no gene encoding O-acetyltransferase in the nsc gene cluster; thus, the last step of 2-O-acetylation leading to neosartoricin may be catalyzed by an unidentified O-acetyltransferase. This is Lactamase-like protein nscB from Neosartorya fischeri (strain ATCC 1020 / DSM 3700 / CBS 544.65 / FGSC A1164 / JCM 1740 / NRRL 181 / WB 181) (Aspergillus fischerianus).